A 229-amino-acid chain; its full sequence is Uracil-DNA glycosylase (229 aa).

The active-site Proton acceptor is D70.

The protein belongs to the uracil-DNA glycosylase (UDG) superfamily. UNG family.

The protein localises to the cytoplasm. The catalysed reaction is Hydrolyzes single-stranded DNA or mismatched double-stranded DNA and polynucleotides, releasing free uracil.. In terms of biological role, excises uracil residues from the DNA which can arise as a result of misincorporation of dUMP residues by DNA polymerase or due to deamination of cytosine. The protein is Uracil-DNA glycosylase of Chlamydia trachomatis serovar L2b (strain UCH-1/proctitis).